We begin with the raw amino-acid sequence, 285 residues long: Bifunctional protein FolD (285 aa).

NADP(+) contacts are provided by residues 163–165, serine 188, and alanine 231; that span reads GRS.

The protein belongs to the tetrahydrofolate dehydrogenase/cyclohydrolase family. In terms of assembly, homodimer.

The catalysed reaction is (6R)-5,10-methylene-5,6,7,8-tetrahydrofolate + NADP(+) = (6R)-5,10-methenyltetrahydrofolate + NADPH. It carries out the reaction (6R)-5,10-methenyltetrahydrofolate + H2O = (6R)-10-formyltetrahydrofolate + H(+). Its pathway is one-carbon metabolism; tetrahydrofolate interconversion. Its function is as follows. Catalyzes the oxidation of 5,10-methylenetetrahydrofolate to 5,10-methenyltetrahydrofolate and then the hydrolysis of 5,10-methenyltetrahydrofolate to 10-formyltetrahydrofolate. The sequence is that of Bifunctional protein FolD from Oenococcus oeni (strain ATCC BAA-331 / PSU-1).